The following is a 418-amino-acid chain: F-box/kelch-repeat protein SKIP20 (418 aa).

The F-box domain occupies 14–61; that stretch reads DLIPGLPEELAIECLVRVPFQFHSSIKSVCRSWKCVISSRSFIKERIG. Positions 79–104 are disordered; that stretch reads PSPAMMEGGEMSQKKKEEEEGESQMT. Kelch repeat units lie at residues 104–150, 153–206, 208–255, and 258–314; these read TQQL…AIQD, KVLL…SVGS, KVYV…SMAT, and GFCV…EFPG.

In terms of assembly, part of a SCF (ASK-cullin-F-box) protein ligase complex. Interacts with SKP1A/ASK1 and SPK1B/ASK2.

It localises to the nucleus. It functions in the pathway protein modification; protein ubiquitination. Functionally, component of SCF(ASK-cullin-F-box) E3 ubiquitin ligase complexes, which may mediate the ubiquitination and subsequent proteasomal degradation of target proteins. The chain is F-box/kelch-repeat protein SKIP20 (SKIP20) from Arabidopsis thaliana (Mouse-ear cress).